Here is an 831-residue protein sequence, read N- to C-terminus: Probable glucan 1,3-beta-glucosidase D (831 aa).

Basic and acidic residues-rich tracts occupy residues 1-24 (MPSH…YREV), 44-56 (RRDD…RSHE), 79-93 (RSHD…RSRA), 102-115 (SRRD…EYRR), 137-151 (RDGQ…DREA), and 198-213 (QRER…MESK). Disordered regions lie at residues 1–179 (MPSH…SGSH) and 192–241 (HYDE…GQSK). Topologically, residues 1–297 (MPSHSRSRDR…AQPPFWKRKK (297 aa)) are cytoplasmic. The chain crosses the membrane as a helical; Signal-anchor for type II membrane protein span at residues 298–318 (WWIVIGVLVVVLAIVIPVAVV). The Extracellular portion of the chain corresponds to 319–831 (MSKKHGHDDD…PSFGDLPEYY (513 aa)). N-linked (GlcNAc...) asparagine glycans are attached at residues Asn-376, Asn-381, Asn-393, Asn-410, Asn-442, Asn-546, and Asn-558. Glu-597 (proton donor) is an active-site residue. Asn-610, Asn-636, Asn-669, and Asn-689 each carry an N-linked (GlcNAc...) asparagine glycan. The active-site Nucleophile is the Glu-702.

The protein belongs to the glycosyl hydrolase 5 (cellulase A) family.

It localises to the cell membrane. The catalysed reaction is Successive hydrolysis of beta-D-glucose units from the non-reducing ends of (1-&gt;3)-beta-D-glucans, releasing alpha-glucose.. Glucosidase involved in the degradation of cellulosic biomass. Active on lichenan. This is Probable glucan 1,3-beta-glucosidase D (exgD) from Aspergillus oryzae (strain ATCC 42149 / RIB 40) (Yellow koji mold).